A 422-amino-acid polypeptide reads, in one-letter code: 3-phosphoshikimate 1-carboxyvinyltransferase (422 aa).

3-phosphoshikimate is bound by residues Lys20, Ser21, and Arg25. Lys20 provides a ligand contact to phosphoenolpyruvate. Phosphoenolpyruvate-binding residues include Gly91 and Arg119. 3-phosphoshikimate is bound by residues Thr163, Ser164, Gln165, Asp305, Gln328, and Lys332. Residue Gln165 participates in phosphoenolpyruvate binding. Asp305 functions as the Proton acceptor in the catalytic mechanism. Phosphoenolpyruvate-binding residues include Arg336 and Arg377.

This sequence belongs to the EPSP synthase family. Monomer.

It localises to the cytoplasm. The catalysed reaction is 3-phosphoshikimate + phosphoenolpyruvate = 5-O-(1-carboxyvinyl)-3-phosphoshikimate + phosphate. It participates in metabolic intermediate biosynthesis; chorismate biosynthesis; chorismate from D-erythrose 4-phosphate and phosphoenolpyruvate: step 6/7. Catalyzes the transfer of the enolpyruvyl moiety of phosphoenolpyruvate (PEP) to the 5-hydroxyl of shikimate-3-phosphate (S3P) to produce enolpyruvyl shikimate-3-phosphate and inorganic phosphate. The sequence is that of 3-phosphoshikimate 1-carboxyvinyltransferase from Ruminiclostridium cellulolyticum (strain ATCC 35319 / DSM 5812 / JCM 6584 / H10) (Clostridium cellulolyticum).